The primary structure comprises 362 residues: Nicotinate-nucleotide--dimethylbenzimidazole phosphoribosyltransferase (362 aa).

The active-site Proton acceptor is E321.

This sequence belongs to the CobT family.

The enzyme catalyses 5,6-dimethylbenzimidazole + nicotinate beta-D-ribonucleotide = alpha-ribazole 5'-phosphate + nicotinate + H(+). It functions in the pathway nucleoside biosynthesis; alpha-ribazole biosynthesis; alpha-ribazole from 5,6-dimethylbenzimidazole: step 1/2. Catalyzes the synthesis of alpha-ribazole-5'-phosphate from nicotinate mononucleotide (NAMN) and 5,6-dimethylbenzimidazole (DMB). This is Nicotinate-nucleotide--dimethylbenzimidazole phosphoribosyltransferase from Clostridium tetani (strain Massachusetts / E88).